Consider the following 221-residue polypeptide: UPF0319 protein CGSHiEE_03630 (221 aa).

A signal peptide spans 1 to 21 (MKLRAVVLGLATLCTSTATFA).

Belongs to the UPF0319 family.

The sequence is that of UPF0319 protein CGSHiEE_03630 from Haemophilus influenzae (strain PittEE).